We begin with the raw amino-acid sequence, 441 residues long: Mitochondrial distribution and morphology protein 12 (441 aa).

An SMP-LTD domain is found at 1–441 (MSIDIDWERA…VYPSFWTFLV (441 aa)). Residues 180-289 (TPLRAVTRGN…SGTPPRRMRE (110 aa)) form a disordered region. Composition is skewed to polar residues over residues 226 to 245 (SRPSTANTGNTLFSRGSVST) and 253 to 263 (SSQTVLANNPG).

It belongs to the MDM12 family. Component of the ER-mitochondria encounter structure (ERMES) or MDM complex, composed of MMM1, MDM10, MDM12 and MDM34. An MMM1 homodimer associates with one molecule of MDM12 on each side in a pairwise head-to-tail manner, and the SMP-LTD domains of MMM1 and MDM12 generate a continuous hydrophobic tunnel for phospholipid trafficking.

It is found in the mitochondrion outer membrane. It localises to the endoplasmic reticulum membrane. Component of the ERMES/MDM complex, which serves as a molecular tether to connect the endoplasmic reticulum (ER) and mitochondria. Components of this complex are involved in the control of mitochondrial shape and protein biogenesis, and function in nonvesicular lipid trafficking between the ER and mitochondria. MDM12 is required for the interaction of the ER-resident membrane protein MMM1 and the outer mitochondrial membrane-resident beta-barrel protein MDM10. The MDM12-MMM1 subcomplex functions in the major beta-barrel assembly pathway that is responsible for biogenesis of all mitochondrial outer membrane beta-barrel proteins, and acts in a late step after the SAM complex. The MDM10-MDM12-MMM1 subcomplex further acts in the TOM40-specific pathway after the action of the MDM12-MMM1 complex. Essential for establishing and maintaining the structure of mitochondria and maintenance of mtDNA nucleoids. In Paracoccidioides brasiliensis (strain Pb18), this protein is Mitochondrial distribution and morphology protein 12.